A 288-amino-acid polypeptide reads, in one-letter code: Phosphatidylserine decarboxylase proenzyme (288 aa).

Catalysis depends on charge relay system; for autoendoproteolytic cleavage activity residues Asp89, His146, and Ser252. The Schiff-base intermediate with substrate; via pyruvic acid; for decarboxylase activity role is filled by Ser252. A Pyruvic acid (Ser); by autocatalysis modification is found at Ser252.

It belongs to the phosphatidylserine decarboxylase family. PSD-B subfamily. Prokaryotic type I sub-subfamily. As to quaternary structure, heterodimer of a large membrane-associated beta subunit and a small pyruvoyl-containing alpha subunit. Requires pyruvate as cofactor. Post-translationally, is synthesized initially as an inactive proenzyme. Formation of the active enzyme involves a self-maturation process in which the active site pyruvoyl group is generated from an internal serine residue via an autocatalytic post-translational modification. Two non-identical subunits are generated from the proenzyme in this reaction, and the pyruvate is formed at the N-terminus of the alpha chain, which is derived from the carboxyl end of the proenzyme. The autoendoproteolytic cleavage occurs by a canonical serine protease mechanism, in which the side chain hydroxyl group of the serine supplies its oxygen atom to form the C-terminus of the beta chain, while the remainder of the serine residue undergoes an oxidative deamination to produce ammonia and the pyruvoyl prosthetic group on the alpha chain. During this reaction, the Ser that is part of the protease active site of the proenzyme becomes the pyruvoyl prosthetic group, which constitutes an essential element of the active site of the mature decarboxylase.

Its subcellular location is the cell membrane. It carries out the reaction a 1,2-diacyl-sn-glycero-3-phospho-L-serine + H(+) = a 1,2-diacyl-sn-glycero-3-phosphoethanolamine + CO2. It functions in the pathway phospholipid metabolism; phosphatidylethanolamine biosynthesis; phosphatidylethanolamine from CDP-diacylglycerol: step 2/2. Functionally, catalyzes the formation of phosphatidylethanolamine (PtdEtn) from phosphatidylserine (PtdSer). The sequence is that of Phosphatidylserine decarboxylase proenzyme from Shewanella frigidimarina (strain NCIMB 400).